We begin with the raw amino-acid sequence, 154 residues long: Small ribosomal subunit protein uS7 (154 aa).

The protein belongs to the universal ribosomal protein uS7 family. Part of the 30S ribosomal subunit. Contacts proteins S9 and S11.

In terms of biological role, one of the primary rRNA binding proteins, it binds directly to 16S rRNA where it nucleates assembly of the head domain of the 30S subunit. Is located at the subunit interface close to the decoding center, probably blocks exit of the E-site tRNA. The polypeptide is Small ribosomal subunit protein uS7 (Karelsulcia muelleri (strain GWSS) (Sulcia muelleri)).